A 182-amino-acid polypeptide reads, in one-letter code: Large ribosomal subunit protein uL6 (182 aa).

Belongs to the universal ribosomal protein uL6 family. Part of the 50S ribosomal subunit.

Its function is as follows. This protein binds to the 23S rRNA, and is important in its secondary structure. It is located near the subunit interface in the base of the L7/L12 stalk, and near the tRNA binding site of the peptidyltransferase center. The sequence is that of Large ribosomal subunit protein uL6 from Dehalococcoides mccartyi (strain ATCC BAA-2266 / KCTC 15142 / 195) (Dehalococcoides ethenogenes (strain 195)).